Here is a 136-residue protein sequence, read N- to C-terminus: Riboflavin kinase (136 aa).

Gly15–Arg20 lines the CDP pocket. Mg(2+) is bound by residues Thr44 and Asn46. The FMN site is built by Thr103 and Glu111. Tyr116–Arg119 contacts CDP.

The protein belongs to the archaeal riboflavin kinase family. Mg(2+) is required as a cofactor.

The enzyme catalyses riboflavin + CTP = CDP + FMN + H(+). It functions in the pathway cofactor biosynthesis; FMN biosynthesis; FMN from riboflavin (CTP route): step 1/1. Functionally, catalyzes the CTP-dependent phosphorylation of riboflavin (vitamin B2) to form flavin mononucleotide (FMN). The sequence is that of Riboflavin kinase from Sulfurisphaera tokodaii (strain DSM 16993 / JCM 10545 / NBRC 100140 / 7) (Sulfolobus tokodaii).